Reading from the N-terminus, the 175-residue chain is Large ribosomal subunit protein uL10 (175 aa).

This sequence belongs to the universal ribosomal protein uL10 family. As to quaternary structure, part of the ribosomal stalk of the 50S ribosomal subunit. The N-terminus interacts with L11 and the large rRNA to form the base of the stalk. The C-terminus forms an elongated spine to which L12 dimers bind in a sequential fashion forming a multimeric L10(L12)X complex.

Forms part of the ribosomal stalk, playing a central role in the interaction of the ribosome with GTP-bound translation factors. This chain is Large ribosomal subunit protein uL10, found in Methylobacterium nodulans (strain LMG 21967 / CNCM I-2342 / ORS 2060).